A 173-amino-acid polypeptide reads, in one-letter code: 16S rRNA aminocarboxypropyltransferase (173 aa).

The S-adenosyl-L-methionine site is built by Thr-25, Leu-72, Leu-96, and Ser-115.

Belongs to the TDD superfamily. TSR3 family.

The protein localises to the cytoplasm. It carries out the reaction an N(1)-methylpseudouridine in rRNA + S-adenosyl-L-methionine = N(1)-methyl-N(3)-[(3S)-3-amino-3-carboxypropyl]pseudouridine in rRNA + S-methyl-5'-thioadenosine + H(+). Its function is as follows. Aminocarboxypropyltransferase that catalyzes the aminocarboxypropyl transfer on pseudouridine corresponding to position 914 in M.jannaschii 16S rRNA. It constitutes the last step in biosynthesis of the hypermodified N1-methyl-N3-(3-amino-3-carboxypropyl) pseudouridine (m1acp3-Psi). The chain is 16S rRNA aminocarboxypropyltransferase from Methanococcoides burtonii (strain DSM 6242 / NBRC 107633 / OCM 468 / ACE-M).